The chain runs to 84 residues: Large ribosomal subunit protein bL27c (84 aa).

The tract at residues 1–23 (MAHKKGAGSTKNGRDSNAKRLGV) is disordered.

Belongs to the bacterial ribosomal protein bL27 family.

Its subcellular location is the plastid. It localises to the chloroplast. This is Large ribosomal subunit protein bL27c from Thalassiosira pseudonana (Marine diatom).